A 162-amino-acid polypeptide reads, in one-letter code: Retinoic acid receptor responder protein 2 (162 aa).

A signal peptide spans M1–A20. Disulfide bonds link C77/C87, C98/C117, and C101/C135. A propeptide spanning residues F156–P162 is cleaved from the precursor.

Secreted in an inactive precursor form, prochemerin, which is proteolytically processed by a variety of extracellular proteases to generate forms with differing levels of bioactivity. For example, the removal of five amino acids results in chemerin-157, which exhibits the highest activity, while removal of six amino acids results in chemerin-156 which has slightly less activity. Some proteases are able to cleave at more than one site and chemerin forms may be sequentially processed by different enzymes to modulate activity levels. The coordinated expression and activity of chemerin-modifying enzymes is essential for regulating its bioactivation, inactivation and, consequently, biological function. Cathepsin G cleaves six C-terminal amino acids from prochemerin (chemerin-156), elastase is able to cleave five (chemerin-157), seven (chemerin-155) or ten (chemerin-152), plasmin cleaves four amino acids (chemerin-158), and tryptase cleaves four (chemerin-158) or seven (chemerin-155). Multiple cleavages might be required to fully activate chemerin, with an initial tryptase cleavage resulting in chemerin with low activity (chemerin-158), and a second cleavage by carboxypeptidase N or B producing highly active chemerin (chemerin-157).

The protein localises to the secreted. In terms of biological role, adipocyte-secreted protein (adipokine) that regulates adipogenesis, metabolism and inflammation through activation of the chemokine-like receptor 1 (CMKLR1). Also acts as a ligand for CMKLR2. Can also bind to C-C chemokine receptor-like 2 (CCRL2), but with a lower affinity than it does to CMKLR1 or CMKLR2. Positively regulates adipocyte differentiation, modulates the expression of adipocyte genes involved in lipid and glucose metabolism and might play a role in angiogenesis, a process essential for the expansion of white adipose tissue. Also acts as a pro-inflammatory adipokine, causing an increase in secretion of pro-inflammatory and prodiabetic adipokines, which further impair adipose tissue metabolic function and have negative systemic effects including impaired insulin sensitivity, altered glucose and lipid metabolism, and a decrease in vascular function in other tissues. Can have both pro- and anti-inflammatory properties depending on the modality of enzymatic cleavage by different classes of proteases. Acts as a chemotactic factor for leukocyte populations expressing CMKLR1, particularly immature plasmacytoid dendritic cells, but also immature myeloid DCs, macrophages and natural killer cells. Exerts an anti-inflammatory role by preventing TNF/TNFA-induced VCAM1 expression and monocytes adhesion in vascular endothelial cells. The effect is mediated via inhibiting activation of NF-kappa-B and CRK/p38 through stimulation of AKT1/NOS3 signaling and nitric oxide production. Exhibits an antimicrobial function in the skin. This is Retinoic acid receptor responder protein 2 (RARRES2) from Bos taurus (Bovine).